We begin with the raw amino-acid sequence, 523 residues long: Acetyl-CoA hydrolase (523 aa).

277 to 281 serves as a coordination point for CoA; it reads GIGNI. The active-site 5-glutamyl coenzyme A thioester intermediate is the Glu-302. Residues Asn-392 and Gly-396 each contribute to the CoA site.

The protein belongs to the acetyl-CoA hydrolase/transferase family.

Its subcellular location is the cytoplasm. The catalysed reaction is acetyl-CoA + H2O = acetate + CoA + H(+). Functionally, presumably involved in regulating the intracellular acetyl-CoA pool for fatty acid and cholesterol synthesis and fatty acid oxidation. This chain is Acetyl-CoA hydrolase (ACH1), found in Eremothecium gossypii (strain ATCC 10895 / CBS 109.51 / FGSC 9923 / NRRL Y-1056) (Yeast).